The chain runs to 510 residues: NAD(P)H-quinone oxidoreductase subunit 2 A, chloroplastic (510 aa).

The next 13 helical transmembrane spans lie at 24–44, 57–77, 99–119, 124–144, 149–169, 183–203, 227–247, 295–315, 323–343, 354–374, 395–415, 418–438, and 484–504; these read LLLF…GLIL, IPWL…ALLF, IFQF…VEYI, MAIT…MFLC, LITI…LSGY, YLLM…WLYG, PGIS…LSPA, WHLL…LIAI, MLAY…IVGD, YMLF…SFGL, ALSL…AGFF, LHLF…IGLL, and MIVC…IIAI.

The protein belongs to the complex I subunit 2 family. NDH is composed of at least 16 different subunits, 5 of which are encoded in the nucleus.

Its subcellular location is the plastid. It is found in the chloroplast thylakoid membrane. It carries out the reaction a plastoquinone + NADH + (n+1) H(+)(in) = a plastoquinol + NAD(+) + n H(+)(out). The enzyme catalyses a plastoquinone + NADPH + (n+1) H(+)(in) = a plastoquinol + NADP(+) + n H(+)(out). In terms of biological role, NDH shuttles electrons from NAD(P)H:plastoquinone, via FMN and iron-sulfur (Fe-S) centers, to quinones in the photosynthetic chain and possibly in a chloroplast respiratory chain. The immediate electron acceptor for the enzyme in this species is believed to be plastoquinone. Couples the redox reaction to proton translocation, and thus conserves the redox energy in a proton gradient. The chain is NAD(P)H-quinone oxidoreductase subunit 2 A, chloroplastic from Carica papaya (Papaya).